Consider the following 147-residue polypeptide: UPF0306 protein KPN78578_35330 (147 aa).

This sequence belongs to the UPF0306 family.

In Klebsiella pneumoniae subsp. pneumoniae (strain ATCC 700721 / MGH 78578), this protein is UPF0306 protein KPN78578_35330.